The chain runs to 397 residues: Digeranylgeranylglycerophospholipid reductase (397 aa).

Residues Ala-15, Glu-34, Cys-45, Gly-46, Gly-48, Arg-101, Ala-125, Glu-163, Asp-284, Gly-296, and Ile-297 each coordinate FAD. A 2,3-bis-O-(geranylgeranyl)-sn-glycerol 1-phospholipid is bound by residues Lys-339 and Val-375.

The protein belongs to the geranylgeranyl reductase family. DGGGPL reductase subfamily. FAD is required as a cofactor.

It catalyses the reaction 2,3-bis-O-(phytanyl)-sn-glycerol 1-phosphate + 8 NADP(+) = 2,3-bis-O-(geranylgeranyl)-sn-glycerol 1-phosphate + 8 NADPH + 8 H(+). The enzyme catalyses 2,3-bis-O-(phytanyl)-sn-glycerol 1-phosphate + 8 NAD(+) = 2,3-bis-O-(geranylgeranyl)-sn-glycerol 1-phosphate + 8 NADH + 8 H(+). The catalysed reaction is a 2,3-bis-O-phytanyl-sn-glycerol 1-phospholipid + 8 A = a 2,3-bis-O-(geranylgeranyl)-sn-glycerol 1-phospholipid + 8 AH2. It carries out the reaction CDP-2,3-bis-O-(geranylgeranyl)-sn-glycerol + 8 AH2 = CDP-2,3-bis-O-(phytanyl)-sn-glycerol + 8 A. It catalyses the reaction archaetidylserine + 8 AH2 = 2,3-bis-O-phytanyl-sn-glycero-3-phospho-L-serine + 8 A. Its pathway is membrane lipid metabolism; glycerophospholipid metabolism. In terms of biological role, is involved in the reduction of 2,3-digeranylgeranylglycerophospholipids (unsaturated archaeols) into 2,3-diphytanylglycerophospholipids (saturated archaeols) in the biosynthesis of archaeal membrane lipids. Catalyzes the formation of archaetidic acid (2,3-di-O-phytanyl-sn-glyceryl phosphate) from 2,3-di-O-geranylgeranylglyceryl phosphate (DGGGP) via the hydrogenation of each double bond of the isoprenoid chains. Is also probably able to reduce double bonds of geranyl groups in CDP-2,3-bis-O-(geranylgeranyl)-sn-glycerol and archaetidylserine, thus acting at various stages in the biosynthesis of archaeal membrane lipids. The chain is Digeranylgeranylglycerophospholipid reductase from Picrophilus torridus (strain ATCC 700027 / DSM 9790 / JCM 10055 / NBRC 100828 / KAW 2/3).